A 283-amino-acid polypeptide reads, in one-letter code: MEMO1 family protein DKAM_1357 (283 aa).

It belongs to the MEMO1 family.

This is MEMO1 family protein DKAM_1357 from Desulfurococcus amylolyticus (strain DSM 18924 / JCM 16383 / VKM B-2413 / 1221n) (Desulfurococcus kamchatkensis).